The chain runs to 206 residues: MLSAQLEAYLAEINLSATAEQKKQLIDFVGMLNKWNKAYNLTSVRDPEAMLVRHIMDSLVVSKHLQGERFIDVGTGPGLPGIPLAIMNPNKTFVLLDSLGKRIRFQKQVAFELGIRNISSVESRVEAYQAEQQFDGVLSRAFASIQDMLSWCHHLPAENGLFYALKGQLNDEELQQMPSGFVIKEIIELKVPKLDEQRHLLKIIKE.

S-adenosyl-L-methionine is bound by residues Gly-74, Leu-79, 125-126, and Arg-140; that span reads VE.

Belongs to the methyltransferase superfamily. RNA methyltransferase RsmG family.

Its subcellular location is the cytoplasm. It carries out the reaction guanosine(527) in 16S rRNA + S-adenosyl-L-methionine = N(7)-methylguanosine(527) in 16S rRNA + S-adenosyl-L-homocysteine. Functionally, specifically methylates the N7 position of guanine in position 527 of 16S rRNA. This chain is Ribosomal RNA small subunit methyltransferase G, found in Shewanella putrefaciens (strain CN-32 / ATCC BAA-453).